The primary structure comprises 58 residues: Large ribosomal subunit protein bL32 (58 aa).

It belongs to the bacterial ribosomal protein bL32 family.

The sequence is that of Large ribosomal subunit protein bL32 from Anaplasma phagocytophilum (strain HZ).